We begin with the raw amino-acid sequence, 308 residues long: MGDNLLTMLGFLNLNKPGGWTSHDCVAKIRRLLKIKRVGHGGTLDPAATGVLPIAVGKATRLLPFLPEKKAYQARIRLGVTTNTDDLQGEILQIGSANHLTLEQIDPLLRQFIGEIEQIPPAFSAISQGGKRLYELARKGELVTPPSRIVHVEKINILDWYPGEHPELELEIICGGGTYIRSIARDLGNLLGVGGTLANLIRTQSCGLELSKSLTLADLETQQHQGNLPLIFPQLALKHLLTISLSAPEARRWCQGQSIVIINSIKLPQSQSVQVVGENGDFLGIGEIATVNISDDREQTLIPKVVLS.

Asp-45 acts as the Nucleophile in catalysis.

The protein belongs to the pseudouridine synthase TruB family. Type 1 subfamily.

It carries out the reaction uridine(55) in tRNA = pseudouridine(55) in tRNA. Functionally, responsible for synthesis of pseudouridine from uracil-55 in the psi GC loop of transfer RNAs. The sequence is that of tRNA pseudouridine synthase B from Gloeothece citriformis (strain PCC 7424) (Cyanothece sp. (strain PCC 7424)).